The following is a 283-amino-acid chain: Bifunctional protein FolD (283 aa).

166 to 168 lines the NADP(+) pocket; sequence GAS.

This sequence belongs to the tetrahydrofolate dehydrogenase/cyclohydrolase family. In terms of assembly, homodimer.

The catalysed reaction is (6R)-5,10-methylene-5,6,7,8-tetrahydrofolate + NADP(+) = (6R)-5,10-methenyltetrahydrofolate + NADPH. The enzyme catalyses (6R)-5,10-methenyltetrahydrofolate + H2O = (6R)-10-formyltetrahydrofolate + H(+). It participates in one-carbon metabolism; tetrahydrofolate interconversion. Its function is as follows. Catalyzes the oxidation of 5,10-methylenetetrahydrofolate to 5,10-methenyltetrahydrofolate and then the hydrolysis of 5,10-methenyltetrahydrofolate to 10-formyltetrahydrofolate. This Coxiella burnetii (strain CbuK_Q154) (Coxiella burnetii (strain Q154)) protein is Bifunctional protein FolD.